The sequence spans 325 residues: MKPILLQGHERSITQIKYNREGDLLFTVAKDPIVNVWYSVNGERLGTYMGHTGAVWCVDADWDTKHVLTGSADNSCRLWDCETGKQLALLKTNSAVRTCGFDFGGSIIMFSTDKQMGYQCFVSFFDLRDPSQIDNNEPYMKIPCNDSKITSAVWGPLGECIIAGHESGELNQYSAKSGEVLVNVKEHSRQINDIQLSRDMTMFVTASKDNTAKLFDSTTLEHQKTFRTERPVNSAALSPNYDHVVLGGGQEAMDVTTTSTRIGKFEARFFHLAFEEEFGRVKGHFGLINSVAFHPDGKSYSSGGEDGYVRIHYFDPQYFEFEFEA.

WD repeat units follow at residues 8 to 47 (GHER…RLGT), 50 to 91 (GHTG…ALLK), 144 to 183 (CNDS…VLVN), and 186 to 225 (EHSR…HQKT). T219 is subject to Phosphothreonine. K264 is modified (N6-acetyllysine). K282 is covalently cross-linked (Glycyl lysine isopeptide (Lys-Gly) (interchain with G-Cter in ubiquitin)). The stretch at 283 to 324 (GHFGLINSVAFHPDGKSYSSGGEDGYVRIHYFDPQYFEFEFE) is one WD 5 repeat. Residue Y308 is modified to Phosphotyrosine.

This sequence belongs to the eIF-3 subunit I family. In terms of assembly, component of the eukaryotic translation initiation factor 3 (eIF-3) complex, which is composed of 13 subunits: EIF3A, EIF3B, EIF3C, EIF3D, EIF3E, EIF3F, EIF3G, EIF3H, EIF3I, EIF3J, EIF3K, EIF3L and EIF3M. The eIF-3 complex appears to include 3 stable modules: module A is composed of EIF3A, EIF3B, EIF3G and EIF3I; module B is composed of EIF3F, EIF3H, and EIF3M; and module C is composed of EIF3C, EIF3D, EIF3E, EIF3K and EIF3L. EIF3C of module C binds EIF3B of module A and EIF3H of module B, thereby linking the three modules. EIF3J is a labile subunit that binds to the eIF-3 complex via EIF3B. The eIF-3 complex interacts with RPS6KB1 under conditions of nutrient depletion. Mitogenic stimulation leads to binding and activation of a complex composed of MTOR and RPTOR, leading to phosphorylation and release of RPS6KB1 and binding of EIF4B to eIF-3. In terms of processing, phosphorylated by TGF-beta type II receptor.

It localises to the cytoplasm. In terms of biological role, component of the eukaryotic translation initiation factor 3 (eIF-3) complex, which is required for several steps in the initiation of protein synthesis. The eIF-3 complex associates with the 40S ribosome and facilitates the recruitment of eIF-1, eIF-1A, eIF-2:GTP:methionyl-tRNAi and eIF-5 to form the 43S pre-initiation complex (43S PIC). The eIF-3 complex stimulates mRNA recruitment to the 43S PIC and scanning of the mRNA for AUG recognition. The eIF-3 complex is also required for disassembly and recycling of post-termination ribosomal complexes and subsequently prevents premature joining of the 40S and 60S ribosomal subunits prior to initiation. The eIF-3 complex specifically targets and initiates translation of a subset of mRNAs involved in cell proliferation, including cell cycling, differentiation and apoptosis, and uses different modes of RNA stem-loop binding to exert either translational activation or repression. This chain is Eukaryotic translation initiation factor 3 subunit I, found in Pongo abelii (Sumatran orangutan).